Consider the following 196-residue polypeptide: Putative NADH dehydrogenase/NAD(P)H nitroreductase Reut_A1586 (196 aa).

The protein belongs to the nitroreductase family. HadB/RutE subfamily. Requires FMN as cofactor.

The protein is Putative NADH dehydrogenase/NAD(P)H nitroreductase Reut_A1586 of Cupriavidus pinatubonensis (strain JMP 134 / LMG 1197) (Cupriavidus necator (strain JMP 134)).